The chain runs to 51 residues: DNA-directed RNA polymerase subunit Rpo12 (51 aa).

Zn(2+)-binding residues include Cys14, Cys29, and Cys32.

This sequence belongs to the archaeal Rpo12/eukaryotic RPC10 RNA polymerase subunit family. In terms of assembly, part of the RNA polymerase complex. The cofactor is Zn(2+).

It is found in the cytoplasm. The catalysed reaction is RNA(n) + a ribonucleoside 5'-triphosphate = RNA(n+1) + diphosphate. In terms of biological role, DNA-dependent RNA polymerase (RNAP) catalyzes the transcription of DNA into RNA using the four ribonucleoside triphosphates as substrates. The chain is DNA-directed RNA polymerase subunit Rpo12 from Methanopyrus kandleri (strain AV19 / DSM 6324 / JCM 9639 / NBRC 100938).